Reading from the N-terminus, the 346-residue chain is MGRGLHVAVVGATGAVGQQMLKTLEDRNFEMDTLTLLSSKRSAGTKVTFKGQELTVQEASPESFEGVNIALFSAGGSVSQALAPEAVKRGAIVIDNTSAFRMDENTPLVVPEVNEADLHEHNGIIANPNCSTIQMVAALEPIRKAYGLNKVIVSTYQAVSGAGNEAVKELYSQTQAILNKEEIEPEIMPVKGDKKHYQIAFNAIPQIDKFQDNGYTFEEMKMINETKKIMHMPDLQVAATCVRLPIQTGHSESVYIEIDRDDATVEDIKNLLKEAPGVTLQDDPSQQLYPMPADAVGKNDVFVGRIRKDLDRANGFHLWVVSDNLLKGAAWNSVQIAESLKKLNLV.

NADP(+) contacts are provided by residues 13–16 and 41–42; these read TGAV and RS. At serine 98 the chain carries Phosphoserine. Phosphate is bound at residue arginine 101. The Acyl-thioester intermediate role is filled by cysteine 130. Tyrosine 146 carries the post-translational modification Phosphotyrosine. Substrate is bound at residue glutamine 157. Residue 160–161 coordinates NADP(+); sequence SG. Lysine 221 contributes to the phosphate binding site. Arginine 243 is a substrate binding site. The active-site Proton acceptor is the histidine 250. NADP(+) is bound at residue asparagine 324.

Belongs to the aspartate-semialdehyde dehydrogenase family. Homodimer.

The enzyme catalyses L-aspartate 4-semialdehyde + phosphate + NADP(+) = 4-phospho-L-aspartate + NADPH + H(+). The protein operates within amino-acid biosynthesis; L-lysine biosynthesis via DAP pathway; (S)-tetrahydrodipicolinate from L-aspartate: step 2/4. It participates in amino-acid biosynthesis; L-methionine biosynthesis via de novo pathway; L-homoserine from L-aspartate: step 2/3. It functions in the pathway amino-acid biosynthesis; L-threonine biosynthesis; L-threonine from L-aspartate: step 2/5. Its function is as follows. Catalyzes the NADPH-dependent formation of L-aspartate-semialdehyde (L-ASA) by the reductive dephosphorylation of L-aspartyl-4-phosphate. The chain is Aspartate-semialdehyde dehydrogenase from Bacillus subtilis (strain 168).